The primary structure comprises 157 residues: Glycine-rich RNA-binding protein (157 aa).

One can recognise an RRM domain in the interval 6–84 (YRCFVGGLAW…RNITVNEAQS (79 aa)). Residues 70–157 (QELDGRNITV…YGGGGGGSRW (88 aa)) form a disordered region. Composition is skewed to gly residues over residues 86 to 138 (GSGG…GGYG) and 145 to 157 (DGGY…GSRW).

Functionally, may play a role in the biosynthesis and processing of heterogeneous nuclear RNA and in the maturation of specific mRNAs in response to wounding. The protein is Glycine-rich RNA-binding protein of Daucus carota (Wild carrot).